The primary structure comprises 570 residues: Pantothenate kinase 2, mitochondrial (570 aa).

The N-terminal 31 residues, 1–31 (MRRLGPFHPRVHWAAPPSLSSGLHRLLFLRG), are a transit peptide targeting the mitochondrion. Disordered stretches follow at residues 34–94 (IPSS…PRAR) and 127–198 (GRLG…SVSR). The Nucleolar localization signal motif lies at 82–94 (RWRNGRGGRPRAR). The span at 84 to 93 (RNGRGGRPRA) shows a compositional bias: basic residues. The span at 155–164 (PEGRRQEPLR) shows a compositional bias: basic and acidic residues. Phosphoserine is present on residues Ser168, Ser169, and Ser189. Over residues 168-179 (SSASVPAVGASA) the composition is skewed to low complexity. The short motif at 268–275 (LELKDLTL) is the Nuclear export signal element. The active-site Proton acceptor is the Glu338. The acetyl-CoA site is built by Ser392, Ser395, and Arg407.

The protein belongs to the type II pantothenate kinase family. In terms of assembly, homodimer. In terms of processing, synthesized as a 62-kDa precursor which is proteolytically processed by the mitochondrial-processing peptidase (MPP) via a 59-kDa intermediate to yield the mature mitochondrial 48-kDa subunit. In terms of tissue distribution, expressed in the brain (at protein level). Ubiquitous. Highly expressed in the testis. Expressed in the umbilical vein endothelial cells (HUVEC).

It localises to the mitochondrion. The protein localises to the mitochondrion intermembrane space. Its subcellular location is the nucleus. It is found in the cytoplasm. The catalysed reaction is (R)-pantothenate + ATP = (R)-4'-phosphopantothenate + ADP + H(+). Its pathway is cofactor biosynthesis; coenzyme A biosynthesis; CoA from (R)-pantothenate: step 1/5. Strongly inhibited by acetyl-CoA and its thioesters. Activated by palmitoylcarnitine. In terms of biological role, mitochondrial isoform that catalyzes the phosphorylation of pantothenate to generate 4'-phosphopantothenate in the first and rate-determining step of coenzyme A (CoA) synthesis. Required for angiogenic activity of umbilical vein of endothelial cells (HUVEC). Its function is as follows. Cytoplasmic isoform that catalyzes the phosphorylation of pantothenate to generate 4'-phosphopantothenate in the first and rate-determining step of coenzyme A (CoA) synthesis. The chain is Pantothenate kinase 2, mitochondrial (PANK2) from Homo sapiens (Human).